An 874-amino-acid chain; its full sequence is Alanine--tRNA ligase (874 aa).

His562, His566, Cys665, and His669 together coordinate Zn(2+).

This sequence belongs to the class-II aminoacyl-tRNA synthetase family. Zn(2+) is required as a cofactor.

The protein resides in the cytoplasm. It carries out the reaction tRNA(Ala) + L-alanine + ATP = L-alanyl-tRNA(Ala) + AMP + diphosphate. Catalyzes the attachment of alanine to tRNA(Ala) in a two-step reaction: alanine is first activated by ATP to form Ala-AMP and then transferred to the acceptor end of tRNA(Ala). Also edits incorrectly charged Ser-tRNA(Ala) and Gly-tRNA(Ala) via its editing domain. The sequence is that of Alanine--tRNA ligase from Pseudomonas syringae pv. tomato (strain ATCC BAA-871 / DC3000).